The sequence spans 397 residues: Vacuolar protein sorting-associated protein 37A (397 aa).

Ser-18 bears the Phosphoserine mark. In terms of domain architecture, VPS37 C-terminal spans 308–397 (KSTFEKKMQR…AMHSQFHAPL (90 aa)).

This sequence belongs to the VPS37 family. Component of the ESCRT-I complex (endosomal sorting complex required for transport I) which consists of TSG101, VPS28, a VPS37 protein (VPS37A to -D) and MVB12A or MVB12B in a 1:1:1:1 stoichiometry. Interacts with TSG101, VPS28 and HGS. Component of an ESCRT-I complex (endosomal sorting complex required for transport I) which consists of TSG101, VPS28, VPS37A and UBAP1 in a 1:1:1:1 stoichiometry.

It is found in the late endosome membrane. It localises to the nucleus. Component of the ESCRT-I complex, a regulator of vesicular trafficking process. Required for the sorting of endocytic ubiquitinated cargos into multivesicular bodies. May be involved in cell growth and differentiation. The protein is Vacuolar protein sorting-associated protein 37A (Vps37a) of Mus musculus (Mouse).